The primary structure comprises 64 residues: SPbeta prophage-derived uncharacterized protein YosJ (64 aa).

This is SPbeta prophage-derived uncharacterized protein YosJ (yosJ) from Bacillus subtilis (strain 168).